A 461-amino-acid chain; its full sequence is Photosynthetic NDH subunit of subcomplex B 1, chloroplastic (461 aa).

The transit peptide at Met1–Ser44 directs the protein to the chloroplast. Positions Asn66 to Pro90 are disordered. A compositionally biased stretch (basic and acidic residues) spans Gly75 to Asp85.

Part of the chloroplast NDH complex, composed of a mixture of chloroplast and nucleus encoded subunits. Component of the NDH subcomplex B, at least composed of PnsB1, PnsB2, PnsB3, PnsB4 and PnsB5.

Its subcellular location is the plastid. It localises to the chloroplast thylakoid membrane. Its function is as follows. NDH shuttles electrons from NAD(P)H:plastoquinone, via FMN and iron-sulfur (Fe-S) centers, to quinones in the photosynthetic chain and possibly in a chloroplast respiratory chain. The immediate electron acceptor for the enzyme in this species is believed to be plastoquinone. Couples the redox reaction to proton translocation, and thus conserves the redox energy in a proton gradient. In Arabidopsis thaliana (Mouse-ear cress), this protein is Photosynthetic NDH subunit of subcomplex B 1, chloroplastic.